Here is a 511-residue protein sequence, read N- to C-terminus: Chromosomal replication initiator protein DnaA (511 aa).

A domain I, interacts with DnaA modulators region spans residues 1 to 90 (MSVELWQQCV…RRSSAPRAAP (90 aa)). The segment at 91 to 174 (NAPVSAAMAA…QVEGALKHTS (84 aa)) is domain II. The interval 125-161 (TAEPAQASDMAEASSRDSYDSMADSAPAPVAPGRTEQ) is disordered. The tract at residues 175–391 (YLNRTFTFET…GALKRVIAHS (217 aa)) is domain III, AAA+ region. Residues glycine 219, glycine 221, lysine 222, and threonine 223 each coordinate ATP. A domain IV, binds dsDNA region spans residues 392–511 (HFMGRDITIE…YKNLLRTLTT (120 aa)).

This sequence belongs to the DnaA family. In terms of assembly, oligomerizes as a right-handed, spiral filament on DNA at oriC.

The protein localises to the cytoplasm. Plays an essential role in the initiation and regulation of chromosomal replication. ATP-DnaA binds to the origin of replication (oriC) to initiate formation of the DNA replication initiation complex once per cell cycle. Binds the DnaA box (a 9 base pair repeat at the origin) and separates the double-stranded (ds)DNA. Forms a right-handed helical filament on oriC DNA; dsDNA binds to the exterior of the filament while single-stranded (ss)DNA is stabiized in the filament's interior. The ATP-DnaA-oriC complex binds and stabilizes one strand of the AT-rich DNA unwinding element (DUE), permitting loading of DNA polymerase. After initiation quickly degrades to an ADP-DnaA complex that is not apt for DNA replication. Binds acidic phospholipids. The protein is Chromosomal replication initiator protein DnaA of Pseudomonas putida (strain W619).